The primary structure comprises 529 residues: Cytochrome P450 monooxygenase oblE (529 aa).

Residues 38–58 (WQYIVTLLIAIITYDQVMYIW) form a helical membrane-spanning segment. Cys477 serves as a coordination point for heme.

Belongs to the cytochrome P450 family. The cofactor is heme.

Its subcellular location is the membrane. The protein operates within secondary metabolite biosynthesis; terpenoid biosynthesis. Cytochrome P450 monooxygenase; part of the gene cluster that mediates the biosynthesis of the sesterterpenes ophiobolins, fungal phytotoxins with potential anti-cancer activities. The first step of the pathway is performed by the sesterterpene synthase oblA that possesses both prenyl transferase and terpene cyclase activity, converting isopentenyl diphosphate and dimethylallyl diphosphate into geranylfarnesyl diphosphate (GFPP) and further converting GFPP into ophiobolin F, respectively. Other sesterterpenoids (C(25) terpenoids) are found as minor products of oblA. The cytochrome P450 monooxygenase oblB then catalyzes a four-step oxidative transformation of ophiobolin F to yield ophiobolin C. The function of the cytochrome P450 monooxygenase oblE has still to be determined. This chain is Cytochrome P450 monooxygenase oblE, found in Emericella variicolor (Aspergillus stellatus).